A 1029-amino-acid chain; its full sequence is Protein STABILIZED1 (1029 aa).

The region spanning 1 to 85 (MVFLSIPNGK…VIIHVLLLGG (85 aa)) is the Ubiquitin-like domain. A Glycyl lysine isopeptide (Gly-Lys) (interchain with K-? in acceptor proteins) cross-link involves residue glycine 85. Residues 142–170 (AAPGVGRGAGKPSEAEAEDDEEAEEKRYD) form a disordered region. The stretch at 210-243 (DSRRKDRREAKLKEEIEKYRASNPKITEQFADLK) forms a coiled coil. HAT repeat units lie at residues 367–399 (YDRN…VEEV), 401–431 (GKIK…CRLA), 432–462 (NPED…KLEH), 463–494 (DVEN…LANE), 496–524 (DARI…LETY), 526–554 (ESKK…LEEA), 639–671 (GSIE…LEKS), 673–705 (GSRE…EKWL), 707–739 (GDVP…LEFE), 741–772 (KEPE…VERE), 774–806 (GNVE…LEER), 808–840 (KHLE…LEEK), 842–874 (NGLN…AELR), 876–908 (DNKR…MAPR), and 940–972 (KKVE…FELQ). A TPR 1 repeat occupies 625-658 (KRTWVADADECKKRGSIETARAIYAHALSVFLTK). The stretch at 794–827 (FKLWLMLGQLEERFKHLEQARKAYDTGLKHCPHC) is one TPR 2 repeat. Residues 926–959 (PHVTIAVAKLFWQDKKVEKARAWFERAVTVGPDI) form a TPR 3 repeat.

As to quaternary structure, component of a pre-mRNA splicing complex. Interacts with ZOP1. Interacts with PRP31. Ubiquitous.

It is found in the nucleus. The protein resides in the cajal body. Pre-mRNA splicing factor required for splicing and for the turnover of unstable transcripts. May be a U5 snRNP-associated protein involved in the formation of U4/U6-U5 tri-snRNP. Involved in responses to abiotic stresses. Involved in microRNAs (miRNAs) biogenesis by functioning in primary miRNAs (pri-miRNAs) splicing. Required for DNA methylation and transcriptional silencing through the RNA-directed DNA methylation (RdDM) pathway. In Arabidopsis thaliana (Mouse-ear cress), this protein is Protein STABILIZED1 (STA1).